The chain runs to 136 residues: Large ribosomal subunit protein bL17 (136 aa).

This sequence belongs to the bacterial ribosomal protein bL17 family. In terms of assembly, part of the 50S ribosomal subunit. Contacts protein L32.

The chain is Large ribosomal subunit protein bL17 from Rickettsia africae (strain ESF-5).